The primary structure comprises 68 residues: Large ribosomal subunit protein uL29 (68 aa).

It belongs to the universal ribosomal protein uL29 family.

The polypeptide is Large ribosomal subunit protein uL29 (Acidiphilium cryptum (strain JF-5)).